Consider the following 236-residue polypeptide: Protein YIPF6 (236 aa).

Ala-2 carries the N-acetylalanine modification. Residues 2–84 are Cytoplasmic-facing; it reads AEAEESPGDP…HVLYPRKSNT (83 aa). Phosphoserine is present on Ser-7. The chain crosses the membrane as a helical span at residues 85-105; it reads LLRDWDLWGPLILCVTLALML. The Lumenal segment spans residues 106–115; sequence QRDSADSEKD. Residues 116-136 form a helical membrane-spanning segment; that stretch reads GGPQFAEVFVIVWFGAVTITL. Residues 137-146 lie on the Cytoplasmic side of the membrane; it reads NSKLLGGNIS. A helical transmembrane segment spans residues 147-167; the sequence is FFQSLCVLGYCILPLTVAMLI. Residues 168-184 are Lumenal-facing; the sequence is CRLVLLADPGPVNFMVR. The chain crosses the membrane as a helical span at residues 185 to 205; the sequence is LFVVIVMFAWSIVASTAFLAD. Residues 206–212 are Cytoplasmic-facing; that stretch reads SQPPNRR. Residues 213–233 form a helical membrane-spanning segment; it reads ALAVYPVFLFYFVISWMILTF. The Lumenal portion of the chain corresponds to 234-236; it reads TPQ.

This sequence belongs to the YIP1 family. In terms of assembly, predominantly interacts with YIPF1 or YIPF2, but may also form a ternary complex with YIPF1 and YIPF2. This interaction may stabilize YIPF1 and YIPF2.

It localises to the golgi apparatus membrane. Its function is as follows. May be required for stable YIPF1 and YIPF2 protein expression. This is Protein YIPF6 (YIPF6) from Homo sapiens (Human).